A 205-amino-acid polypeptide reads, in one-letter code: Thiamine-phosphate synthase (205 aa).

4-amino-2-methyl-5-(diphosphooxymethyl)pyrimidine contacts are provided by residues Gln-37–Lys-41 and Asn-69. Mg(2+)-binding residues include Asp-70 and Asp-89. 4-amino-2-methyl-5-(diphosphooxymethyl)pyrimidine is bound at residue Ser-108. Thr-134–Ser-136 provides a ligand contact to 2-[(2R,5Z)-2-carboxy-4-methylthiazol-5(2H)-ylidene]ethyl phosphate. Lys-137 contributes to the 4-amino-2-methyl-5-(diphosphooxymethyl)pyrimidine binding site. 2-[(2R,5Z)-2-carboxy-4-methylthiazol-5(2H)-ylidene]ethyl phosphate-binding positions include Gly-165 and Ile-185 to Ser-186.

This sequence belongs to the thiamine-phosphate synthase family. Requires Mg(2+) as cofactor.

The enzyme catalyses 2-[(2R,5Z)-2-carboxy-4-methylthiazol-5(2H)-ylidene]ethyl phosphate + 4-amino-2-methyl-5-(diphosphooxymethyl)pyrimidine + 2 H(+) = thiamine phosphate + CO2 + diphosphate. It catalyses the reaction 2-(2-carboxy-4-methylthiazol-5-yl)ethyl phosphate + 4-amino-2-methyl-5-(diphosphooxymethyl)pyrimidine + 2 H(+) = thiamine phosphate + CO2 + diphosphate. The catalysed reaction is 4-methyl-5-(2-phosphooxyethyl)-thiazole + 4-amino-2-methyl-5-(diphosphooxymethyl)pyrimidine + H(+) = thiamine phosphate + diphosphate. Its pathway is cofactor biosynthesis; thiamine diphosphate biosynthesis; thiamine phosphate from 4-amino-2-methyl-5-diphosphomethylpyrimidine and 4-methyl-5-(2-phosphoethyl)-thiazole: step 1/1. Condenses 4-methyl-5-(beta-hydroxyethyl)thiazole monophosphate (THZ-P) and 2-methyl-4-amino-5-hydroxymethyl pyrimidine pyrophosphate (HMP-PP) to form thiamine monophosphate (TMP). The protein is Thiamine-phosphate synthase of Clostridium botulinum (strain 657 / Type Ba4).